We begin with the raw amino-acid sequence, 392 residues long: Nuclear speckle splicing regulatory protein 1 homolog (392 aa).

Disordered stretches follow at residues 1-73 (MASK…IFDY), 113-169 (RQLE…AFND), and 187-357 (LLND…ARLD). Composition is skewed to basic and acidic residues over residues 54–65 (KAAEREHQKAEA), 113–132 (RQLE…REKE), 149–160 (KQQEEVKKHREQ), 205–238 (QKNV…KSIY), and 313–357 (KSIE…ARLD). A coiled-coil region spans residues 76-132 (NYDEIQAIKNEKKEEARKADKNRESKYAENIIKAHARRQLEQFSREERQQLREREKE).

This sequence belongs to the NSRP1 family. Expressed in the intestine, nervous system and head neurons in both larvae and adults. Expressed in the distal tip cell.

Its subcellular location is the cytoplasm. The protein resides in the nucleus. In terms of biological role, required for the cessation of distal tip cell migration at the end of larval morphogenesis. This chain is Nuclear speckle splicing regulatory protein 1 homolog (ccdc-55), found in Caenorhabditis elegans.